The chain runs to 579 residues: Alpha-longipinene synthase (579 aa).

Mg(2+) is bound by residues D332, D336, D476, and N484. Positions 332 to 336 (DDLYD) match the DDXXD motif motif.

It belongs to the terpene synthase family. Tpsd subfamily. Mg(2+) is required as a cofactor. Requires Mn(2+) as cofactor.

The catalysed reaction is (2E,6E)-farnesyl diphosphate = alpha-longipinene + diphosphate. The protein operates within sesquiterpene biosynthesis. It functions in the pathway terpene metabolism; oleoresin biosynthesis. Terpene synthase (TPS) involved in the biosynthesis of sesquiterpene natural products included in conifer oleoresin secretions and volatile emissions; these compounds contribute to biotic and abiotic stress defense against herbivores and pathogens. Catalyzes the conversion of (2E,6E)-farnesyl diphosphate (FPP) to alpha-longipinene. In Picea sitchensis (Sitka spruce), this protein is Alpha-longipinene synthase.